The following is a 494-amino-acid chain: Histidine--tRNA ligase (494 aa).

The tract at residues 1 to 20 (MAKDQKKQPRPKAETPKGFR) is disordered.

This sequence belongs to the class-II aminoacyl-tRNA synthetase family. In terms of assembly, homodimer.

It localises to the cytoplasm. It catalyses the reaction tRNA(His) + L-histidine + ATP = L-histidyl-tRNA(His) + AMP + diphosphate + H(+). The protein is Histidine--tRNA ligase of Paracoccus denitrificans (strain Pd 1222).